The following is a 292-amino-acid chain: Alpha-soluble NSF attachment protein (292 aa).

It belongs to the SNAP family.

The protein resides in the cytoplasmic vesicle. It is found in the membrane. Required for vesicular transport between the endoplasmic reticulum and the Golgi apparatus. Also between the endosome and phagosome. The protein is Alpha-soluble NSF attachment protein of Drosophila melanogaster (Fruit fly).